We begin with the raw amino-acid sequence, 443 residues long: Multidrug resistance protein MdtA (443 aa).

The N-terminal stretch at 1–24 (MKAQSKRTSRLLILLGIAVAIIVA) is a signal peptide. Over residues 36–46 (DGSTGAQQHAV) the composition is skewed to polar residues. Disordered regions lie at residues 36 to 57 (DGSTGAQQHAVGNNPARAGGRR) and 398 to 443 (TPRS…AEKS). Residues 409–419 (AAEKPATAEKA) are compositionally biased toward basic and acidic residues. Residues 427 to 443 (SATGASAGSTTTAAEKS) show a composition bias toward low complexity.

This sequence belongs to the membrane fusion protein (MFP) (TC 8.A.1) family. Part of a tripartite efflux system composed of MdtA, MdtB and MdtC.

The protein localises to the cell inner membrane. The polypeptide is Multidrug resistance protein MdtA (Yersinia enterocolitica serotype O:8 / biotype 1B (strain NCTC 13174 / 8081)).